Reading from the N-terminus, the 141-residue chain is Hemoglobin subunit alpha (141 aa).

The Globin domain maps to 1 to 141 (VLSPADKSNV…VSTVLTSKYR (141 aa)). Phosphoserine is present on S3. K7 and K11 each carry N6-succinyllysine. Residue K16 is modified to N6-acetyllysine; alternate. K16 is subject to N6-succinyllysine; alternate. At Y24 the chain carries Phosphotyrosine. S35 is subject to Phosphoserine. An N6-succinyllysine modification is found at K40. S49 is modified (phosphoserine). Residue H58 coordinates O2. Residue H87 coordinates heme b. At S102 the chain carries Phosphoserine. The residue at position 108 (T108) is a Phosphothreonine. A phosphoserine mark is found at S124 and S131. Phosphothreonine occurs at positions 134 and 137. Position 138 is a phosphoserine (S138).

The protein belongs to the globin family. As to quaternary structure, heterotetramer of two alpha chains and two beta chains. In terms of tissue distribution, red blood cells.

Its function is as follows. Involved in oxygen transport from the lung to the various peripheral tissues. Functionally, hemopressin acts as an antagonist peptide of the cannabinoid receptor CNR1. Hemopressin-binding efficiently blocks cannabinoid receptor CNR1 and subsequent signaling. This chain is Hemoglobin subunit alpha (HBA), found in Saguinus oedipus (Cotton-top tamarin).